We begin with the raw amino-acid sequence, 344 residues long: Anthranilate phosphoribosyltransferase (344 aa).

5-phospho-alpha-D-ribose 1-diphosphate-binding positions include glycine 85, 88 to 89, threonine 93, 95 to 98, 113 to 121, and serine 125; these read GD, NIST, and KHGGRSVSS. Residue glycine 85 coordinates anthranilate. Serine 97 contributes to the Mg(2+) binding site. An anthranilate-binding site is contributed by arginine 171. Aspartate 230 and glutamate 231 together coordinate Mg(2+).

This sequence belongs to the anthranilate phosphoribosyltransferase family. As to quaternary structure, homodimer. It depends on Mg(2+) as a cofactor.

It catalyses the reaction N-(5-phospho-beta-D-ribosyl)anthranilate + diphosphate = 5-phospho-alpha-D-ribose 1-diphosphate + anthranilate. It participates in amino-acid biosynthesis; L-tryptophan biosynthesis; L-tryptophan from chorismate: step 2/5. Catalyzes the transfer of the phosphoribosyl group of 5-phosphorylribose-1-pyrophosphate (PRPP) to anthranilate to yield N-(5'-phosphoribosyl)-anthranilate (PRA). This is Anthranilate phosphoribosyltransferase from Delftia acidovorans (strain DSM 14801 / SPH-1).